The primary structure comprises 518 residues: Beta-secretase 2 (518 aa).

The signal sequence occupies residues 1-20 (MGALARALLLPLLAQWLLRA). Positions 21 to 62 (APELAPAPFTLPLRVAAATNRVVAPTPGPGTPAERHADGLAL) are excised as a propeptide. Topologically, residues 21–473 (APELAPAPFT…SEPILWIVSY (453 aa)) are extracellular. The region spanning 92-429 (YYLEMLIGTP…DRAQKRVGFA (338 aa)) is the Peptidase A1 domain. Residue D110 is part of the active site. N-linked (GlcNAc...) asparagine glycosylation is present at N170. Cystine bridges form between C233–C433, C292–C457, and C344–C393. D303 is an active-site residue. A glycan (N-linked (GlcNAc...) asparagine) is linked at N366. Residues 474–494 (ALMSVCGAILLVLIVLLLLPF) form a helical membrane-spanning segment. The Cytoplasmic segment spans residues 495 to 518 (RCQRRPRDPEVVNDESSLVRHRWK).

Belongs to the peptidase A1 family. Monomer. Interacts with RTN3 and RTN4. Post-translationally, undergoes autoproteolytic cleavage. Glycosylated. Brain. Present in neurons within the hippocampus, frontal cortex and temporal cortex (at protein level). Expressed at low levels in most peripheral tissues and at higher levels in colon, kidney, pancreas, placenta, prostate, stomach and trachea. Expressed at low levels in the brain. Found in spinal cord, medulla oblongata, substantia nigra and locus coruleus. Expressed in the ductal epithelium of both normal and malignant prostate.

It is found in the cell membrane. The protein localises to the golgi apparatus. Its subcellular location is the endoplasmic reticulum. It localises to the endosome. The protein resides in the melanosome. It carries out the reaction Broad endopeptidase specificity. Cleaves Glu-Val-Asn-Leu-|-Asp-Ala-Glu-Phe in the Swedish variant of Alzheimer's amyloid precursor protein.. Its function is as follows. Responsible for the proteolytic processing of the amyloid precursor protein (APP). Cleaves APP, between residues 690 and 691, leading to the generation and extracellular release of beta-cleaved soluble APP, and a corresponding cell-associated C-terminal fragment which is later released by gamma-secretase. It has also been shown that it can cleave APP between residues 671 and 672. Involved in the proteolytic shedding of PMEL at early stages of melanosome biogenesis. Cleaves PMEL within the M-beta fragment to release the amyloidogenic PMEL luminal fragment containing M-alpha and a small portion of M-beta N-terminus. This is a prerequisite step for subsequent processing and assembly of PMEL fibrils into amyloid sheets. Responsible also for the proteolytic processing of CLTRN in pancreatic beta cells. The polypeptide is Beta-secretase 2 (BACE2) (Homo sapiens (Human)).